Here is a 343-residue protein sequence, read N- to C-terminus: Sodium/bile acid cotransporter 7 (343 aa).

Topologically, residues 1–10 are cytoplasmic; that stretch reads MGLLERLRKE. A helical membrane pass occupies residues 11 to 31; it reads WFIVGIILVIAAAKLEPTIGG. Topologically, residues 32-37 are extracellular; it reads KGGPLK. Residues 38 to 58 traverse the membrane as a helical segment; it reads PEITITYIAVSAIFFNSGLSL. The Cytoplasmic portion of the chain corresponds to 59-71; that stretch reads KTEELTNALMHVK. A helical transmembrane segment spans residues 72 to 92; it reads LHLFVQLFTLVFFPTAIWVFL. The Extracellular segment spans residues 93–116; the sequence is QVLSLTPINEWLLKGLQTVSCMPP. A helical transmembrane segment spans residues 117–137; the sequence is PVSSAVILTKAVGGNEAAAIF. Residue asparagine 138 is a topological domain, cytoplasmic. The chain crosses the membrane as a helical span at residues 139–159; it reads SAFGSFLGIVVTPLLLLLFLG. Residues 160–163 lie on the Extracellular side of the membrane; sequence SSSS. A helical membrane pass occupies residues 164 to 184; that stretch reads VPFTSIFSQLFMTVVVPLIIG. The Cytoplasmic portion of the chain corresponds to 185–201; it reads QIVRRYIKDWLERKKPP. The helical transmembrane segment at 202–222 threads the bilayer; the sequence is FGAISSCVLLMIIYTTFCDTF. The Extracellular portion of the chain corresponds to 223–234; the sequence is SNPNIDLDTFSL. A helical transmembrane segment spans residues 235-255; it reads VIIVFIIFFIQLAFMLLTFLF. Residues 256–270 lie on the Cytoplasmic side of the membrane; sequence STSKNTGFTPADTVA. The chain crosses the membrane as a helical span at residues 271 to 291; it reads IVFCSTHKSLTLGIPMLKIVF. Topologically, residues 292–298 are extracellular; it reads AGYEHLS. A helical transmembrane segment spans residues 299–319; sequence LISVPLLIYHPAQILLGSVLV. At 320-343 the chain is on the cytoplasmic side; that stretch reads PTIKSWMLSRQKALKLTRQPKVPL.

It belongs to the bile acid:sodium symporter (BASS) (TC 2.A.28) family.

The protein localises to the cell membrane. It localises to the endoplasmic reticulum membrane. It is found in the golgi apparatus membrane. Functionally, involved in teeth and skeletal development. Has an essential role in the biosynthesis and trafficking of glycosaminoglycans and glycoproteins to produce a proper functioning extracellular matrix. Required for extracellular matrix mineralization. Also involved in the regulation of cellular calcium homeostasis. Does not show transport activity towards bile acids or steroid sulfates. This Xenopus tropicalis (Western clawed frog) protein is Sodium/bile acid cotransporter 7 (slc10a7).